The primary structure comprises 609 residues: Indole-3-acetic acid-amido synthetase GH3.17 (609 aa).

This sequence belongs to the IAA-amido conjugating enzyme family.

Catalyzes the synthesis of indole-3-acetic acid (IAA)-amino acid conjugates, providing a mechanism for the plant to cope with the presence of excess auxin. Strongly reactive with Glu, Gln, Trp, Asp, Ala, Leu, Phe, Gly, Tyr, Met, Ile and Val. Appears to favor Glu over Asp while the other GH3 favor Asp over Glu. Little or no product formation with His, Ser, Thr, Arg, Lys, or Cys. Also active on pyruvic and butyric acid analogs of IAA, PAA and the synthetic auxin naphthaleneacetic acid (NAA). The two chlorinated synthetic auxin herbicides 2,4-D and 3,6-dichloro-o-anisic acid (dicamba) cannot be used as substrates. This Arabidopsis thaliana (Mouse-ear cress) protein is Indole-3-acetic acid-amido synthetase GH3.17 (GH3.17).